The primary structure comprises 360 residues: DNA polymerase IV (360 aa).

A UmuC domain is found at 9–191 (IMHLDIDAFY…LNINKIPYIG (183 aa)). Mg(2+) contacts are provided by aspartate 13 and aspartate 108. Residue glutamate 109 is part of the active site.

It belongs to the DNA polymerase type-Y family. Monomer. Mg(2+) is required as a cofactor.

The protein localises to the cytoplasm. The catalysed reaction is DNA(n) + a 2'-deoxyribonucleoside 5'-triphosphate = DNA(n+1) + diphosphate. Its function is as follows. Poorly processive, error-prone DNA polymerase involved in untargeted mutagenesis. Copies undamaged DNA at stalled replication forks, which arise in vivo from mismatched or misaligned primer ends. These misaligned primers can be extended by PolIV. Exhibits no 3'-5' exonuclease (proofreading) activity. May be involved in translesional synthesis, in conjunction with the beta clamp from PolIII. The sequence is that of DNA polymerase IV from Ureaplasma parvum serovar 3 (strain ATCC 27815 / 27 / NCTC 11736).